The chain runs to 158 residues: 6,7-dimethyl-8-ribityllumazine synthase (158 aa).

5-amino-6-(D-ribitylamino)uracil-binding positions include Trp27, Ser58–Glu60, and Val81–Ile83. Gly86–Thr87 lines the (2S)-2-hydroxy-3-oxobutyl phosphate pocket. His89 serves as the catalytic Proton donor. Phe114 lines the 5-amino-6-(D-ribitylamino)uracil pocket. Residue Arg128 coordinates (2S)-2-hydroxy-3-oxobutyl phosphate.

It belongs to the DMRL synthase family.

The enzyme catalyses (2S)-2-hydroxy-3-oxobutyl phosphate + 5-amino-6-(D-ribitylamino)uracil = 6,7-dimethyl-8-(1-D-ribityl)lumazine + phosphate + 2 H2O + H(+). It participates in cofactor biosynthesis; riboflavin biosynthesis; riboflavin from 2-hydroxy-3-oxobutyl phosphate and 5-amino-6-(D-ribitylamino)uracil: step 1/2. Functionally, catalyzes the formation of 6,7-dimethyl-8-ribityllumazine by condensation of 5-amino-6-(D-ribitylamino)uracil with 3,4-dihydroxy-2-butanone 4-phosphate. This is the penultimate step in the biosynthesis of riboflavin. In Leifsonia xyli subsp. xyli (strain CTCB07), this protein is 6,7-dimethyl-8-ribityllumazine synthase.